Here is a 181-residue protein sequence, read N- to C-terminus: Shikimate kinase (181 aa).

17-22 contacts ATP; it reads GVGKTT. Residue threonine 21 coordinates Mg(2+). 3 residues coordinate substrate: aspartate 39, arginine 63, and glycine 85. Arginine 122 is a binding site for ATP. A substrate-binding site is contributed by arginine 141.

This sequence belongs to the shikimate kinase family. In terms of assembly, monomer. It depends on Mg(2+) as a cofactor.

The protein resides in the cytoplasm. It catalyses the reaction shikimate + ATP = 3-phosphoshikimate + ADP + H(+). It functions in the pathway metabolic intermediate biosynthesis; chorismate biosynthesis; chorismate from D-erythrose 4-phosphate and phosphoenolpyruvate: step 5/7. Functionally, catalyzes the specific phosphorylation of the 3-hydroxyl group of shikimic acid using ATP as a cosubstrate. This Nostoc punctiforme (strain ATCC 29133 / PCC 73102) protein is Shikimate kinase.